Here is a 353-residue protein sequence, read N- to C-terminus: MSEIFDVNAAIYPFPARPVPLDTNEKAFYREKIKTLLKQRDAVLVAHYYTDPEIQALAEETGGCVADSLEMARFGNNHPASTLLVAGVRFMGETAKILNPEKKVLMPTLNAECSLDLGCPVDEFTAFCDSHPDRTVVVYANTSAAVKAKADWVVTSSIAVELIEHLDSLGEKIIWAPDRHLGSYVQKKSGADVLCWQGACIVHDEFKTQALARMKALYPDAAVLVHPESPQAVVDMADAVGSTSQLIQAAKTLPQKTLIVATDRGIFYKMQQACPDKELFEAPTAGEGATCRSCAHCPWMAMNGLRAIAEGLEQGGVMHKIHVDEELRQQALIPLNRMLDFANQLKLQVKGNA.

Positions 47 and 68 each coordinate iminosuccinate. Cysteine 113 is a [4Fe-4S] cluster binding site. Residues 139 to 141 (YAN) and serine 156 each bind iminosuccinate. Cysteine 200 contributes to the [4Fe-4S] cluster binding site. Residues 226 to 228 (HPE) and threonine 243 each bind iminosuccinate. Cysteine 297 contributes to the [4Fe-4S] cluster binding site.

It belongs to the quinolinate synthase family. Type 1 subfamily. Requires [4Fe-4S] cluster as cofactor.

It localises to the cytoplasm. It catalyses the reaction iminosuccinate + dihydroxyacetone phosphate = quinolinate + phosphate + 2 H2O + H(+). Its pathway is cofactor biosynthesis; NAD(+) biosynthesis; quinolinate from iminoaspartate: step 1/1. Catalyzes the condensation of iminoaspartate with dihydroxyacetone phosphate to form quinolinate. This is Quinolinate synthase from Yersinia pseudotuberculosis serotype O:3 (strain YPIII).